Consider the following 318-residue polypeptide: Solute carrier family 25 member 34 (318 aa).

Solcar repeat units lie at residues 18-111, 115-208, and 218-309; these read VSPA…ACQA, QQPG…AKAW, and DSWL…LRKL. The next 6 helical transmembrane spans lie at 21 to 41, 59 to 79, 112 to 134, 184 to 205, 220 to 240, and 292 to 315; these read AVDLVLGASACCLACVFTNPL, TYPRPYRGFVSSVTAVARADG, GLTQQPGGTVVAGAVAGALGAFV, VGAAVPRVTVGSAAQLATFTSA, WLATLAGGMISSIAVVAVMAP, and LGPHTILSMFFWDELRKLALRAQH.

It belongs to the mitochondrial carrier (TC 2.A.29) family.

The protein localises to the mitochondrion inner membrane. The enzyme catalyses a dicarboxylate(in) + sulfate(out) = a dicarboxylate(out) + sulfate(in). In terms of biological role, putative antiporter that exchanges dicarboxylates and sulfur oxoanions across the inner membrane of mitochondria. The protein is Solute carrier family 25 member 34 (Slc25a34) of Rattus norvegicus (Rat).